Here is a 479-residue protein sequence, read N- to C-terminus: Ribosomal RNA small subunit methyltransferase F (479 aa).

S-adenosyl-L-methionine-binding positions include 125-131 (AAAPGSK), Glu-149, Asp-176, and Asp-194. Cys-247 (nucleophile) is an active-site residue.

Belongs to the class I-like SAM-binding methyltransferase superfamily. RsmB/NOP family.

Its subcellular location is the cytoplasm. The enzyme catalyses cytidine(1407) in 16S rRNA + S-adenosyl-L-methionine = 5-methylcytidine(1407) in 16S rRNA + S-adenosyl-L-homocysteine + H(+). Specifically methylates the cytosine at position 1407 (m5C1407) of 16S rRNA. This Salmonella paratyphi A (strain ATCC 9150 / SARB42) protein is Ribosomal RNA small subunit methyltransferase F.